A 1392-amino-acid polypeptide reads, in one-letter code: DNA-directed RNA polymerase subunit beta (1392 aa).

The protein belongs to the RNA polymerase beta chain family. The RNAP catalytic core consists of 2 alpha, 1 beta, 1 beta' and 1 omega subunit. When a sigma factor is associated with the core the holoenzyme is formed, which can initiate transcription.

It catalyses the reaction RNA(n) + a ribonucleoside 5'-triphosphate = RNA(n+1) + diphosphate. In terms of biological role, DNA-dependent RNA polymerase catalyzes the transcription of DNA into RNA using the four ribonucleoside triphosphates as substrates. In Neisseria gonorrhoeae (strain NCCP11945), this protein is DNA-directed RNA polymerase subunit beta.